The primary structure comprises 400 residues: Queuine tRNA-ribosyltransferase (400 aa).

D93 acts as the Proton acceptor in catalysis. Substrate contacts are provided by residues 93 to 97 (DSGGF), D166, and G247. The segment at 277–283 (GIGDVDD) is RNA binding. D296 serves as the catalytic Nucleophile. The segment at 301 to 305 (TRLGR) is RNA binding; important for wobble base 34 recognition. Residues C338, C340, C343, and H369 each coordinate Zn(2+).

Belongs to the queuine tRNA-ribosyltransferase family. As to quaternary structure, homodimer. Within each dimer, one monomer is responsible for RNA recognition and catalysis, while the other monomer binds to the replacement base PreQ1. Zn(2+) serves as cofactor.

It carries out the reaction 7-aminomethyl-7-carbaguanine + guanosine(34) in tRNA = 7-aminomethyl-7-carbaguanosine(34) in tRNA + guanine. It functions in the pathway tRNA modification; tRNA-queuosine biosynthesis. Its function is as follows. Catalyzes the base-exchange of a guanine (G) residue with the queuine precursor 7-aminomethyl-7-deazaguanine (PreQ1) at position 34 (anticodon wobble position) in tRNAs with GU(N) anticodons (tRNA-Asp, -Asn, -His and -Tyr). Catalysis occurs through a double-displacement mechanism. The nucleophile active site attacks the C1' of nucleotide 34 to detach the guanine base from the RNA, forming a covalent enzyme-RNA intermediate. The proton acceptor active site deprotonates the incoming PreQ1, allowing a nucleophilic attack on the C1' of the ribose to form the product. After dissociation, two additional enzymatic reactions on the tRNA convert PreQ1 to queuine (Q), resulting in the hypermodified nucleoside queuosine (7-(((4,5-cis-dihydroxy-2-cyclopenten-1-yl)amino)methyl)-7-deazaguanosine). The protein is Queuine tRNA-ribosyltransferase of Roseiflexus sp. (strain RS-1).